A 283-amino-acid chain; its full sequence is CUE domain-containing protein 2 (283 aa).

Over residues 87 to 109 the composition is skewed to polar residues; the sequence is LSGARNKENVQPQSSEVQGQVSI. Residues 87 to 139 form a disordered region; the sequence is LSGARNKENVQPQSSEVQGQVSISPEPLQRPEKLKEETMSSAGDTQDEAAGPE. At Ser-110 the chain carries Phosphoserine. A compositionally biased stretch (basic and acidic residues) spans 115–124; the sequence is QRPEKLKEET. The CUE domain occupies 141–184; it reads ELLPGVDVLLEVFPTCSVEQAQWVLAKARGDLEEAVQMLVEGKQ.

Belongs to the CUEDC2 family. As to quaternary structure, interacts with PGR and ESR1.

It is found in the cytoplasm. The protein localises to the nucleus. In terms of biological role, controls PGR and ESR1 protein levels through their targeting for ubiquitination and subsequent proteasomal degradation. The protein is CUE domain-containing protein 2 (CUEDC2) of Bos taurus (Bovine).